The primary structure comprises 196 residues: ATP-dependent Clp protease proteolytic subunit (196 aa).

Residue serine 99 is the Nucleophile of the active site. The active site involves histidine 124.

Belongs to the peptidase S14 family. Fourteen ClpP subunits assemble into 2 heptameric rings which stack back to back to give a disk-like structure with a central cavity, resembling the structure of eukaryotic proteasomes.

Its subcellular location is the cytoplasm. The enzyme catalyses Hydrolysis of proteins to small peptides in the presence of ATP and magnesium. alpha-casein is the usual test substrate. In the absence of ATP, only oligopeptides shorter than five residues are hydrolyzed (such as succinyl-Leu-Tyr-|-NHMec, and Leu-Tyr-Leu-|-Tyr-Trp, in which cleavage of the -Tyr-|-Leu- and -Tyr-|-Trp bonds also occurs).. Cleaves peptides in various proteins in a process that requires ATP hydrolysis. Has a chymotrypsin-like activity. Plays a major role in the degradation of misfolded proteins. This chain is ATP-dependent Clp protease proteolytic subunit, found in Nitratiruptor sp. (strain SB155-2).